A 213-amino-acid polypeptide reads, in one-letter code: Hemolysin-3 homolog (213 aa).

The next 7 membrane-spanning stretches (helical) occupy residues 11–31, 41–61, 75–95, 103–123, 127–147, 157–177, and 185–205; these read AITH…LIIF, IVSF…STLL, IIDH…FLLG, FTLL…KIFF, FILL…IAVK, GFSL…FYIW, and AIWH…VLFY.

The protein belongs to the UPF0073 (Hly-III) family.

It localises to the cell membrane. The polypeptide is Hemolysin-3 homolog (yplQ) (Bacillus subtilis (strain 168)).